Reading from the N-terminus, the 307-residue chain is Ornithine carbamoyltransferase (307 aa).

Residues 54–57 (STRT), Gln-81, Arg-105, and 132–135 (HPCQ) each bind carbamoyl phosphate. L-ornithine-binding positions include Asn-163, Asp-221, and 225–226 (SM). Residues 261 to 262 (CL) and Arg-289 each bind carbamoyl phosphate.

The protein belongs to the aspartate/ornithine carbamoyltransferase superfamily. OTCase family.

The protein resides in the cytoplasm. It carries out the reaction carbamoyl phosphate + L-ornithine = L-citrulline + phosphate + H(+). The protein operates within amino-acid biosynthesis; L-arginine biosynthesis; L-arginine from L-ornithine and carbamoyl phosphate: step 1/3. In terms of biological role, reversibly catalyzes the transfer of the carbamoyl group from carbamoyl phosphate (CP) to the N(epsilon) atom of ornithine (ORN) to produce L-citrulline. In Aromatoleum aromaticum (strain DSM 19018 / LMG 30748 / EbN1) (Azoarcus sp. (strain EbN1)), this protein is Ornithine carbamoyltransferase.